Here is a 78-residue protein sequence, read N- to C-terminus: Beta-defensin 105A (78 aa).

A signal peptide spans 1–27 (MALIRKTFYFLFAVFFILVQLPSGCQA). 3 cysteine pairs are disulfide-bonded: Cys-43–Cys-74, Cys-53–Cys-67, and Cys-57–Cys-73.

The protein belongs to the beta-defensin family.

The protein localises to the secreted. Its function is as follows. Has antimicrobial activity. The protein is Beta-defensin 105A (DEFB105A) of Gorilla gorilla gorilla (Western lowland gorilla).